The chain runs to 171 residues: Protein-export protein SecB (171 aa).

The protein belongs to the SecB family. In terms of assembly, homotetramer, a dimer of dimers. One homotetramer interacts with 1 SecA dimer.

The protein localises to the cytoplasm. Its function is as follows. One of the proteins required for the normal export of preproteins out of the cell cytoplasm. It is a molecular chaperone that binds to a subset of precursor proteins, maintaining them in a translocation-competent state. It also specifically binds to its receptor SecA. The chain is Protein-export protein SecB from Granulibacter bethesdensis (strain ATCC BAA-1260 / CGDNIH1).